A 94-amino-acid chain; its full sequence is Cell division topological specificity factor (94 aa).

The protein belongs to the MinE family.

Prevents the cell division inhibition by proteins MinC and MinD at internal division sites while permitting inhibition at polar sites. This ensures cell division at the proper site by restricting the formation of a division septum at the midpoint of the long axis of the cell. This is Cell division topological specificity factor from Acetivibrio thermocellus (strain ATCC 27405 / DSM 1237 / JCM 9322 / NBRC 103400 / NCIMB 10682 / NRRL B-4536 / VPI 7372) (Clostridium thermocellum).